A 428-amino-acid chain; its full sequence is Neuromedin-U receptor 1 (428 aa).

At 1–59 (MTPPCLNCSIFPGALSPNASRSPLVCNISEFKWPYQPEDLNLTDEALRLKYLGPQQMKQ) the chain is on the extracellular side. 2 N-linked (GlcNAc...) asparagine glycosylation sites follow: Asn-27 and Asn-41. A helical membrane pass occupies residues 60–80 (FVPICVTYLLIFVVGTLGNGL). The Cytoplasmic portion of the chain corresponds to 81–96 (TCTVILRNKTMRTPTN). The helical transmembrane segment at 97–117 (FYLFSLAVSDMLVLLVGLPLE) threads the bilayer. The Extracellular portion of the chain corresponds to 118–137 (LYEMQQNYPFQLGASACYFR). A disulfide bond links Cys-134 and Cys-219. Residues 138-158 (ILLLETVCLASVLNVTALSVE) traverse the membrane as a helical segment. The Cytoplasmic portion of the chain corresponds to 159-181 (RYVAVVRPLQAKSVMTRAHVRRM). Residues 182–202 (VGAIWVLATLFSLPNTSLHGL) form a helical membrane-spanning segment. Residues 203–235 (SQLTVPCRGPVPDSAICSLVGPMDFYKLVVLTT) are Extracellular-facing. A helical transmembrane segment spans residues 236-256 (ALLFFCLPMVTISVLYLLIGL). At 257–294 (RLRRERMLLQVEVKGRKTAATQETSHRRIQLQDRGRRQ) the chain is on the cytoplasmic side. A helical membrane pass occupies residues 295–315 (VTKMLFALVVVFGICWAPFHA). Residues 316 to 339 (DRIMWSLVYGHSTEGLHLAYQCVH) are Extracellular-facing. The helical transmembrane segment at 340-360 (IASGIFFYLGSAANPVLYSLM) threads the bilayer. At 361–428 (STRFRETFLQ…PGCQQETDPS (68 aa)) the chain is on the cytoplasmic side.

This sequence belongs to the G-protein coupled receptor 1 family. As to expression, ubiquitously expressed.

The protein resides in the cell membrane. Functionally, receptor for the neuromedin-U and neuromedin-S neuropeptides. This Mus musculus (Mouse) protein is Neuromedin-U receptor 1 (Nmur1).